Here is a 241-residue protein sequence, read N- to C-terminus: Probable transcriptional regulatory protein stu0195 (241 aa).

The protein belongs to the TACO1 family. YeeN subfamily.

It localises to the cytoplasm. The sequence is that of Probable transcriptional regulatory protein stu0195 from Streptococcus thermophilus (strain ATCC BAA-250 / LMG 18311).